Consider the following 77-residue polypeptide: Small ribosomal subunit protein bS20 (77 aa).

This sequence belongs to the bacterial ribosomal protein bS20 family.

Its function is as follows. Binds directly to 16S ribosomal RNA. In Streptococcus agalactiae serotype Ia (strain ATCC 27591 / A909 / CDC SS700), this protein is Small ribosomal subunit protein bS20.